Here is a 268-residue protein sequence, read N- to C-terminus: Putative carbamate hydrolase RutD (268 aa).

Residues 24 to 243 (VILSAGLGGS…NATLDIAPWG (220 aa)) form the AB hydrolase-1 domain.

This sequence belongs to the AB hydrolase superfamily. Hydrolase RutD family.

The catalysed reaction is carbamate + 2 H(+) = NH4(+) + CO2. In terms of biological role, involved in pyrimidine catabolism. May facilitate the hydrolysis of carbamate, a reaction that can also occur spontaneously. The sequence is that of Putative carbamate hydrolase RutD from Caulobacter sp. (strain K31).